A 472-amino-acid chain; its full sequence is Membrane-bound lytic murein transglycosylase F (472 aa).

Positions 1–24 (MRLLVIFLLALLLMACKEAPKPLA) are cleaved as a signal peptide. The non-LT domain stretch occupies residues 25–259 (DPRTTKEIIV…HLIDRYYGHA (235 aa)). Residues 260-472 (DRLKPVDVTT…NGFGNTLSQE (213 aa)) form an LT domain region. Glu306 is a catalytic residue.

In the N-terminal section; belongs to the bacterial solute-binding protein 3 family. This sequence in the C-terminal section; belongs to the transglycosylase Slt family.

Its subcellular location is the cell outer membrane. It catalyses the reaction Exolytic cleavage of the (1-&gt;4)-beta-glycosidic linkage between N-acetylmuramic acid (MurNAc) and N-acetylglucosamine (GlcNAc) residues in peptidoglycan, from either the reducing or the non-reducing ends of the peptidoglycan chains, with concomitant formation of a 1,6-anhydrobond in the MurNAc residue.. Functionally, murein-degrading enzyme that degrades murein glycan strands and insoluble, high-molecular weight murein sacculi, with the concomitant formation of a 1,6-anhydromuramoyl product. Lytic transglycosylases (LTs) play an integral role in the metabolism of the peptidoglycan (PG) sacculus. Their lytic action creates space within the PG sacculus to allow for its expansion as well as for the insertion of various structures such as secretion systems and flagella. This chain is Membrane-bound lytic murein transglycosylase F, found in Methylobacillus flagellatus (strain ATCC 51484 / DSM 6875 / VKM B-1610 / KT).